We begin with the raw amino-acid sequence, 358 residues long: Peptide chain release factor 1 (358 aa).

Q234 carries the post-translational modification N5-methylglutamine.

This sequence belongs to the prokaryotic/mitochondrial release factor family. Methylated by PrmC. Methylation increases the termination efficiency of RF1.

The protein resides in the cytoplasm. Its function is as follows. Peptide chain release factor 1 directs the termination of translation in response to the peptide chain termination codons UAG and UAA. In Akkermansia muciniphila (strain ATCC BAA-835 / DSM 22959 / JCM 33894 / BCRC 81048 / CCUG 64013 / CIP 107961 / Muc), this protein is Peptide chain release factor 1.